The chain runs to 1050 residues: Transcription intermediary factor 1-alpha (1050 aa).

A Glycyl lysine isopeptide (Lys-Gly) (interchain with G-Cter in SUMO2) cross-link involves residue K7. The segment covering 15 to 30 (ASAAASGGPSAAPSGE) has biased composition (low complexity). The interval 15–44 (ASAAASGGPSAAPSGENEAESRQGPDSERG) is disordered. Residues 33–44 (AESRQGPDSERG) show a composition bias toward basic and acidic residues. The RING-type zinc-finger motif lies at 56–82 (CAVCHQNIQSRAPKLLPCLHSFCQRCL). T101 is subject to Phosphothreonine. S110 bears the Phosphoserine mark. 2 consecutive B box-type zinc fingers follow at residues 158-211 (KSNQ…VSPE) and 218-259 (QRPV…YQFI). Zn(2+)-binding residues include C163, C166, C187, and H200. K205 participates in a covalent cross-link: Glycyl lysine isopeptide (Lys-Gly) (interchain with G-Cter in SUMO2). 4 residues coordinate Zn(2+): C223, H226, C246, and H251. K276 is covalently cross-linked (Glycyl lysine isopeptide (Lys-Gly) (interchain with G-Cter in SUMO2)). Residues 289–359 (NQIQNRIIEV…AGLSKQLEHV (71 aa)) adopt a coiled-coil conformation. The tract at residues 429 to 456 (ESQPQMPKQNPVVEQNSQPPSGLSSNQL) is disordered. Residues 431-456 (QPQMPKQNPVVEQNSQPPSGLSSNQL) show a composition bias toward polar residues. Glycyl lysine isopeptide (Lys-Gly) (interchain with G-Cter in SUMO2) cross-links involve residues K436 and K458. Omega-N-methylarginine is present on R469. 2 stretches are compositionally biased toward low complexity: residues 476 to 490 (QVMA…RPAP) and 499 to 510 (QGPIQQPSISHQ). Residues 476–550 (QVMAQRQQVQ…PPNQNIPRQA (75 aa)) form a disordered region. The span at 526–535 (PNGPVLPPHP) shows a compositional bias: pro residues. K552 participates in a covalent cross-link: Glycyl lysine isopeptide (Lys-Gly) (interchain with G-Cter in SUMO2). Residues 571–594 (ISSGQGTPSTTNSTSSTPSSPTIT) are disordered. Over residues 577-594 (TPSTTNSTSSTPSSPTIT) the composition is skewed to low complexity. K641 participates in a covalent cross-link: Glycyl lysine isopeptide (Lys-Gly) (interchain with G-Cter in SUMO2). Residues 643–712 (TNIDHGQPRP…PAGADSTHKV (70 aa)) are disordered. Phosphoserine is present on residues S654, S660, and S667. Residues 654–666 (SNRTVQSPNSSVP) are compositionally biased toward polar residues. A compositionally biased stretch (low complexity) spans 685–707 (SPSASSVGSRGSSGSSSKPAGAD). Glycyl lysine isopeptide (Lys-Gly) (interchain with G-Cter in SUMO2) cross-links involve residues K702 and K711. A Glycyl lysine isopeptide (Lys-Gly) (interchain with G-Cter in SUMO1); alternate cross-link involves residue K723. A Glycyl lysine isopeptide (Lys-Gly) (interchain with G-Cter in SUMO2); alternate cross-link involves residue K723. K741 is covalently cross-linked (Glycyl lysine isopeptide (Lys-Gly) (interchain with G-Cter in SUMO2)). S744 carries the post-translational modification Phosphoserine. Residues 754 to 779 (NYPRSILTSLLLNSSQSSTSEETVLR) form a nuclear receptor binding site (NRBS) region. The interval 766-824 (NSSQSSTSEETVLRSDAPDSTGDQPGLHQDNSSNGKSEWLDPSQKSPLHVGETRKEDDP) is disordered. At S768 the chain carries Phosphoserine; by ATM. Residue K801 forms a Glycyl lysine isopeptide (Lys-Gly) (interchain with G-Cter in SUMO2) linkage. At S808 the chain carries Phosphoserine. A Glycyl lysine isopeptide (Lys-Gly) (interchain with G-Cter in SUMO2) cross-link involves residue K810. Phosphoserine is present on S811. Position 818 is a phosphothreonine (T818). The segment at 826 to 873 (EDWCAVCQNGGELLCCEKCPKVFHLSCHVPTLTNFPSGEWICTFCRDL) adopts a PHD-type zinc-finger fold. The segment at 834–840 (NGGELLC) is interaction with histone H3 that is not methylated at 'Lys-4' (H3K4me0). Residue K875 forms a Glycyl lysine isopeptide (Lys-Gly) (interchain with G-Cter in SUMO2) linkage. A Nuclear localization signal motif is present at residues 891–907 (KKKTEGLVKLTPIDKRK). The region spanning 899 to 1004 (KLTPIDKRKC…NYFEELLKNL (106 aa)) is the Bromo domain. Residue K949 forms a Glycyl lysine isopeptide (Lys-Gly) (interchain with G-Cter in SUMO2) linkage. The interval 979-980 (FN) is interaction with histone H3 that is acetylated at 'Lys-23' (H3K23ac). Residue K992 forms a Glycyl lysine isopeptide (Lys-Gly) (interchain with G-Cter in SUMO2) linkage. Basic and acidic residues predominate over residues 1011–1026 (PKPEFRNESEDNKFSD). The segment at 1011-1036 (PKPEFRNESEDNKFSDDSDDDFVQPR) is disordered. A phosphoserine mark is found at S1019, S1025, and S1028. Residue K1041 forms a Glycyl lysine isopeptide (Lys-Gly) (interchain with G-Cter in SUMO2) linkage. S1042 is modified (phosphoserine).

Interacts with CARM1, NCOA2/GRIP1, PML, KAT5/TIP60, BRD7, CBX1, CBX3 and CBX5. Part of a coactivator complex containing TRIM24, NCOA2 and CARM1. Interacts with NR3C2/MCR. Interacts with the ligand-binding domain of estrogen receptors (in vitro). Interaction with DNA-bound estrogen receptors requires the presence of estradiol. Interacts with AR and p53/TP53. Interacts (via bromo domain) with histone H3 (via N-terminus), provided that it is not methylated at 'Lys-4' (H3K4me0). Does not interact with histone H3 that is methylated at 'Lys-4' (H3K4me1, H3K4me2 or H3K4me3). Interacts (via bromo domain) with histone H3 (via N-terminus) that is acetylated at 'Lys-23' (H3K23ac). Has the highest affinity for histone H3 that is both unmodified at 'Lys-4' (H3K4me0) and acetylated at 'Lys-23' (H3K23ac). Has very low affinity for histone H3 that is methylated at 'Lys-9' (H3K9me), or acetylated at both 'Lys-9' (H3K9ac) and 'Lys-14' (H3K14ac), or acetylated at 'Lys-27' (H3K27ac) (in vitro). Interacts with TRIM16. Post-translationally, phosphorylated at Ser-768 by ATM kinase induces ubiquitination and degradation during DNA damage. In terms of processing, sumoylated. Undergoes ubiquitination-mediated degradation in response to DNA damage.

Its subcellular location is the nucleus. The protein localises to the cytoplasm. The protein resides in the mitochondrion. It catalyses the reaction S-ubiquitinyl-[E2 ubiquitin-conjugating enzyme]-L-cysteine + [acceptor protein]-L-lysine = [E2 ubiquitin-conjugating enzyme]-L-cysteine + N(6)-ubiquitinyl-[acceptor protein]-L-lysine.. The protein operates within protein modification; protein ubiquitination. In terms of biological role, transcriptional coactivator that interacts with numerous nuclear receptors and coactivators and modulates the transcription of target genes. Interacts with chromatin depending on histone H3 modifications, having the highest affinity for histone H3 that is both unmodified at 'Lys-4' (H3K4me0) and acetylated at 'Lys-23' (H3K23ac). Has E3 protein-ubiquitin ligase activity. During the DNA damage response, participates in an autoregulatory feedback loop with TP53. Early in response to DNA damage, ATM kinase phosphorylates TRIM24 leading to its ubiquitination and degradation. After sufficient DNA repair has occurred, TP53 activates TRIM24 transcription, ultimately leading to TRIM24-mediated TP53 ubiquitination and degradation. Plays a role in the regulation of cell proliferation and apoptosis, at least in part via its effects on p53/TP53 levels. Up-regulates ligand-dependent transcription activation by AR, GCR/NR3C1, thyroid hormone receptor (TR) and ESR1. Modulates transcription activation by retinoic acid (RA) receptors, including RARA. Plays a role in regulating retinoic acid-dependent proliferation of hepatocytes. Also participates in innate immunity by mediating the specific 'Lys-63'-linked ubiquitination of TRAF3 leading to activation of downstream signal transduction of the type I IFN pathway. Additionally, negatively regulates NLRP3/CASP1/IL-1beta-mediated pyroptosis and cell migration probably by ubiquitinating NLRP3. This is Transcription intermediary factor 1-alpha (TRIM24) from Homo sapiens (Human).